The primary structure comprises 462 residues: Coagulation factor IX (462 aa).

The signal sequence occupies residues 1–21 (MADAPGLIPIFLLGYLLSTEC). The propeptide occupies 22–39 (AVFLDRENATKILTRPKR). Residues tyrosine 40, asparagine 41, glutamate 46, glutamate 47, glutamate 54, glutamate 56, glutamate 59, glutamate 60, glutamate 65, glutamate 66, and glutamate 69 each contribute to the Ca(2+) site. The Gla domain maps to 40 to 86 (YNSGKLEEFVQGNLERECIEERCSFEEAREVFENTEKTTEFWKQYVD). 4-carboxyglutamate occurs at positions 46, 47, 54, 56, 59, 60, 65, 66, 69, 72, and 75. Glutamate 54 lines the Mg(2+) pocket. A disulfide bridge connects residues cysteine 57 and cysteine 62. Glutamate 59 provides a ligand contact to Mg(2+). Residue glutamate 65 participates in Mg(2+) binding. Glutamate 69 is a binding site for Mg(2+). Glutamate 75 contacts Ca(2+). Glutamate 75 is a binding site for Mg(2+). Threonine 78 is a glycosylation site (O-linked (GalNAc...) threonine). Positions 79, 86, 87, and 89 each coordinate Ca(2+). 4-carboxyglutamate is present on glutamate 79. Mg(2+) is bound at residue glutamate 79. In terms of domain architecture, EGF-like; calcium-binding spans 86–122 (DGDQCESNPCLNGGICKDDINSYECWCQAGFEGRNCE). 10 disulfide bridges follow: cysteine 90/cysteine 101, cysteine 95/cysteine 110, cysteine 112/cysteine 121, cysteine 127/cysteine 138, cysteine 134/cysteine 148, cysteine 150/cysteine 163, cysteine 171/cysteine 336, cysteine 253/cysteine 269, cysteine 383/cysteine 397, and cysteine 408/cysteine 436. A glycan (O-linked (Glc...) serine) is linked at serine 92. 2 residues coordinate Ca(2+): aspartate 103 and aspartate 104. Aspartate 103 carries the post-translational modification (3R)-3-hydroxyaspartate. A Phosphoserine modification is found at serine 107. The propeptide at 186-227 (AETVFSNTDYGNSTELILDDITNSTILDNLTENSEPINDFTR) is activation peptide. A Sulfotyrosine modification is found at tyrosine 195. Phosphoserine is present on serine 198. The residue at position 199 (threonine 199) is a Phosphothreonine; alternate. O-linked (GalNAc...) threonine; alternate glycosylation occurs at threonine 199. N-linked (GlcNAc...) asparagine glycosylation is found at asparagine 208 and asparagine 214. O-linked (GalNAc...) threonine glycosylation is found at threonine 216 and threonine 226. Residues 228–460 (VVGGENAKPG…YVNWIKEKTK (233 aa)) enclose the Peptidase S1 domain. Histidine 268 functions as the Charge relay system in the catalytic mechanism. 5 residues coordinate Ca(2+): glutamate 282, asparagine 284, glutamate 287, glutamate 289, and glutamate 292. An N-linked (GlcNAc...) asparagine glycan is attached at asparagine 307. Aspartate 316 (charge relay system) is an active-site residue. Serine 412 functions as the Charge relay system in the catalytic mechanism.

This sequence belongs to the peptidase S1 family. As to quaternary structure, heterodimer of a light chain and a heavy chain; disulfide-linked. Interacts (inactive and activated) with F11 (activated) in calcium-dependent manner. Interacts with SERPINC1. Interacts (inactive and activated) with nitrophorin-2, an anticoagulant protein from Rhodnius prolixus. Post-translationally, activated by factor XIa, which excises the activation peptide. The propeptide can also be removed by snake venom protease. Activated by coagulation factor VIIa-tissue factor (F7-F3) complex in calcium-dependent manner. In terms of processing, the iron and 2-oxoglutarate dependent 3-hydroxylation of aspartate and asparagine is (R) stereospecific within EGF domains. Predominantly O-glucosylated at Ser-92 by POGLUT1 in vitro.

The protein resides in the secreted. The enzyme catalyses Selective cleavage of Arg-|-Ile bond in factor X to form factor Xa.. Functionally, factor IX is a vitamin K-dependent plasma protein that participates in the intrinsic pathway of blood coagulation by converting factor X to its active form in the presence of Ca(2+) ions, phospholipids, and factor VIIIa. This Rattus norvegicus (Rat) protein is Coagulation factor IX (F9).